Reading from the N-terminus, the 345-residue chain is tRNA pseudouridine synthase B (345 aa).

The Nucleophile role is filled by Asp39.

It belongs to the pseudouridine synthase TruB family. Type 1 subfamily.

The catalysed reaction is uridine(55) in tRNA = pseudouridine(55) in tRNA. Functionally, responsible for synthesis of pseudouridine from uracil-55 in the psi GC loop of transfer RNAs. The protein is tRNA pseudouridine synthase B of Rickettsia peacockii (strain Rustic).